The chain runs to 417 residues: Phosphoglycerate kinase (417 aa).

Residues V23, D24, F25, N26, Q39, R40, S63, H64, G66, R67, L122, R123, H170, and R171 each contribute to the (2R)-3-phosphoglycerate site. S203 carries the phosphoserine modification. Residue G214 participates in ADP binding. A CDP-binding site is contributed by G214. Residues A215 and K216 each contribute to the AMP site. A215 contacts ATP. Residue A215 participates in Mg(2+) binding. D219 lines the CDP pocket. D219 provides a ligand contact to Mg(2+). An AMP-binding site is contributed by K220. K220 serves as a coordination point for ATP. G238 is an ADP binding site. G238 provides a ligand contact to CDP. Positions 239 and 313 each coordinate AMP. 2 residues coordinate ATP: A239 and G313. Residues G338 and F343 each contribute to the CDP site. Position 343 (F343) interacts with ADP. E344 is an AMP binding site. ATP-binding residues include E344, D375, and T376. D375 is a Mg(2+) binding site.

Belongs to the phosphoglycerate kinase family. Monomer. Mg(2+) is required as a cofactor. In terms of processing, dephosphorylated by PTC1 and PTC2 at Ser-203; the protein is cytosolic when dephosphorylated.

The protein resides in the cytoplasm. It localises to the cytosol. It is found in the mitochondrion. The enzyme catalyses (2R)-3-phosphoglycerate + ATP = (2R)-3-phospho-glyceroyl phosphate + ADP. It participates in carbohydrate degradation; glycolysis; pyruvate from D-glyceraldehyde 3-phosphate: step 2/5. Functionally, catalyzes one of the two ATP producing reactions in the glycolytic pathway via the reversible conversion of 1,3-diphosphoglycerate to 3-phosphoglycerate. Both L- and D- forms of purine and pyrimidine nucleotides can be used as substrates, but the activity is much lower on pyrimidines. Negatively regulates the biosynthesis of acetyl-CoA from pyruvate in the mitochondrion and consequently also attenuates aflatoxin production. This is Phosphoglycerate kinase from Aspergillus flavus (strain ATCC 200026 / FGSC A1120 / IAM 13836 / NRRL 3357 / JCM 12722 / SRRC 167).